A 221-amino-acid polypeptide reads, in one-letter code: Iron-sulfur cluster repair protein YtfE (221 aa).

The protein belongs to the RIC family. YtfE subfamily. In terms of assembly, homodimer.

The protein localises to the cytoplasm. Its function is as follows. Di-iron-containing protein involved in the repair of iron-sulfur clusters damaged by oxidative and nitrosative stress conditions. The polypeptide is Iron-sulfur cluster repair protein YtfE (Yersinia pestis bv. Antiqua (strain Antiqua)).